We begin with the raw amino-acid sequence, 693 residues long: Elongation factor G (693 aa).

The 275-residue stretch at 8-282 (KNTRNIGIMA…AAIEYLPSPL (275 aa)) folds into the tr-type G domain. GTP is bound by residues 17–24 (AHIDAGKT), 81–85 (DTPGH), and 135–138 (NKMD).

It belongs to the TRAFAC class translation factor GTPase superfamily. Classic translation factor GTPase family. EF-G/EF-2 subfamily.

The protein localises to the cytoplasm. In terms of biological role, catalyzes the GTP-dependent ribosomal translocation step during translation elongation. During this step, the ribosome changes from the pre-translocational (PRE) to the post-translocational (POST) state as the newly formed A-site-bound peptidyl-tRNA and P-site-bound deacylated tRNA move to the P and E sites, respectively. Catalyzes the coordinated movement of the two tRNA molecules, the mRNA and conformational changes in the ribosome. This chain is Elongation factor G, found in Macrococcus caseolyticus (strain JCSC5402) (Macrococcoides caseolyticum).